Here is a 333-residue protein sequence, read N- to C-terminus: Adenosine deaminase (333 aa).

Zn(2+) is bound by residues His-12 and His-14. The substrate site is built by His-14, Asp-16, and Gly-170. Zn(2+) is bound at residue His-197. Glu-200 (proton donor) is an active-site residue. Residue Asp-278 participates in Zn(2+) binding. Asp-279 provides a ligand contact to substrate.

This sequence belongs to the metallo-dependent hydrolases superfamily. Adenosine and AMP deaminases family. Adenosine deaminase subfamily. Zn(2+) is required as a cofactor.

It carries out the reaction adenosine + H2O + H(+) = inosine + NH4(+). The enzyme catalyses 2'-deoxyadenosine + H2O + H(+) = 2'-deoxyinosine + NH4(+). Catalyzes the hydrolytic deamination of adenosine and 2-deoxyadenosine. In Aliivibrio fischeri (strain ATCC 700601 / ES114) (Vibrio fischeri), this protein is Adenosine deaminase.